A 305-amino-acid chain; its full sequence is Ornithine carbamoyltransferase (305 aa).

Carbamoyl phosphate-binding positions include 53 to 56 (STRT), Gln80, Arg104, and 131 to 134 (HPCQ). Residues Asn162, Asp219, and 223–224 (SM) contribute to the L-ornithine site. Residues 259 to 260 (CL) and Arg287 each bind carbamoyl phosphate.

Belongs to the aspartate/ornithine carbamoyltransferase superfamily. OTCase family.

The protein resides in the cytoplasm. The catalysed reaction is carbamoyl phosphate + L-ornithine = L-citrulline + phosphate + H(+). It functions in the pathway amino-acid biosynthesis; L-arginine biosynthesis; L-arginine from L-ornithine and carbamoyl phosphate: step 1/3. Its function is as follows. Reversibly catalyzes the transfer of the carbamoyl group from carbamoyl phosphate (CP) to the N(epsilon) atom of ornithine (ORN) to produce L-citrulline. In Psychrobacter cryohalolentis (strain ATCC BAA-1226 / DSM 17306 / VKM B-2378 / K5), this protein is Ornithine carbamoyltransferase.